Here is a 622-residue protein sequence, read N- to C-terminus: Chaperone protein HscA homolog (622 aa).

It belongs to the heat shock protein 70 family.

Functionally, chaperone involved in the maturation of iron-sulfur cluster-containing proteins. Has a low intrinsic ATPase activity which is markedly stimulated by HscB. This is Chaperone protein HscA homolog from Burkholderia thailandensis (strain ATCC 700388 / DSM 13276 / CCUG 48851 / CIP 106301 / E264).